Reading from the N-terminus, the 433-residue chain is 4-hydroxy-3-methylbut-2-en-1-yl diphosphate synthase (flavodoxin) (433 aa).

Positions 320, 323, 366, and 373 each coordinate [4Fe-4S] cluster.

It belongs to the IspG family. [4Fe-4S] cluster is required as a cofactor.

The enzyme catalyses (2E)-4-hydroxy-3-methylbut-2-enyl diphosphate + oxidized [flavodoxin] + H2O + 2 H(+) = 2-C-methyl-D-erythritol 2,4-cyclic diphosphate + reduced [flavodoxin]. The protein operates within isoprenoid biosynthesis; isopentenyl diphosphate biosynthesis via DXP pathway; isopentenyl diphosphate from 1-deoxy-D-xylulose 5-phosphate: step 5/6. Its function is as follows. Converts 2C-methyl-D-erythritol 2,4-cyclodiphosphate (ME-2,4cPP) into 1-hydroxy-2-methyl-2-(E)-butenyl 4-diphosphate. The protein is 4-hydroxy-3-methylbut-2-en-1-yl diphosphate synthase (flavodoxin) of Beijerinckia indica subsp. indica (strain ATCC 9039 / DSM 1715 / NCIMB 8712).